Consider the following 76-residue polypeptide: UPF0291 protein BT9727_1737 (76 aa).

Belongs to the UPF0291 family.

The protein resides in the cytoplasm. The chain is UPF0291 protein BT9727_1737 from Bacillus thuringiensis subsp. konkukian (strain 97-27).